A 250-amino-acid polypeptide reads, in one-letter code: rRNA methyltransferase 2, mitochondrial (250 aa).

The N-terminal 35 residues, 1–35 (MRLVFTGNCVFKRLLHTEIGGKYAKQQPRNLKGRS), are a transit peptide targeting the mitochondrion. Residues 90–93 (PGSW), aspartate 119, 136–137 (DF), and aspartate 161 contribute to the S-adenosyl-L-methionine site. The Proton acceptor role is filled by lysine 201.

Belongs to the class I-like SAM-binding methyltransferase superfamily. RNA methyltransferase RlmE family.

The protein localises to the mitochondrion. It carries out the reaction a uridine in rRNA + S-adenosyl-L-methionine = a 2'-O-methyluridine in rRNA + S-adenosyl-L-homocysteine + H(+). Functionally, S-adenosyl-L-methionine-dependent 2'-O-ribose methyltransferase that catalyzes the formation of 2'-O-methyluridine at position 1579 (Um1579) in the mitochondrial large subunit ribosomal RNA (mtLSU rRNA), a universally conserved modification in the peptidyl transferase domain of the mtLSU rRNA. This activity may require prior 2'-O-methylguanosine modification at position 1580 (Gm1580) by MRM3. Essential for late-stage assembly of mtLSU required for efficient translation of mitochondrial DNA encoded proteins; methyltransferase activity is not required for this function. Essential for mitochondrial respiratory function. The chain is rRNA methyltransferase 2, mitochondrial from Drosophila melanogaster (Fruit fly).